The following is a 49-amino-acid chain: ILIIGGTGYIGRKVDVVISAVKFLPSEFGNDVDRVVFVKEEDIGTFTIK.

5 to 11 (GGTGYIG) contributes to the NADP(+) binding site.

It belongs to the NmrA-type oxidoreductase family. Isoflavone reductase subfamily.

Its subcellular location is the cytoplasm. The protein is Isoflavone reductase homolog 2 of Pseudotsuga menziesii (Douglas-fir).